The chain runs to 369 residues: Tetraacyldisaccharide 4'-kinase (369 aa).

Residue 52-59 (TVGGTGKT) participates in ATP binding.

Belongs to the LpxK family.

The enzyme catalyses a lipid A disaccharide + ATP = a lipid IVA + ADP + H(+). Its pathway is glycolipid biosynthesis; lipid IV(A) biosynthesis; lipid IV(A) from (3R)-3-hydroxytetradecanoyl-[acyl-carrier-protein] and UDP-N-acetyl-alpha-D-glucosamine: step 6/6. Functionally, transfers the gamma-phosphate of ATP to the 4'-position of a tetraacyldisaccharide 1-phosphate intermediate (termed DS-1-P) to form tetraacyldisaccharide 1,4'-bis-phosphate (lipid IVA). This chain is Tetraacyldisaccharide 4'-kinase, found in Parabacteroides distasonis (strain ATCC 8503 / DSM 20701 / CIP 104284 / JCM 5825 / NCTC 11152).